Reading from the N-terminus, the 186-residue chain is Large ribosomal subunit protein uL5 (186 aa).

The protein belongs to the universal ribosomal protein uL5 family. As to quaternary structure, part of the 50S ribosomal subunit; contacts the 5S rRNA and probably tRNA. Forms a bridge to the 30S subunit in the 70S ribosome.

Functionally, this is one of the proteins that bind and probably mediate the attachment of the 5S RNA into the large ribosomal subunit, where it forms part of the central protuberance. In the 70S ribosome it contacts protein S13 of the 30S subunit (bridge B1b), connecting the 2 subunits; this bridge is implicated in subunit movement. May contact the P site tRNA; the 5S rRNA and some of its associated proteins might help stabilize positioning of ribosome-bound tRNAs. This Methanopyrus kandleri (strain AV19 / DSM 6324 / JCM 9639 / NBRC 100938) protein is Large ribosomal subunit protein uL5.